Consider the following 423-residue polypeptide: Putative competence-damage inducible protein (423 aa).

This sequence belongs to the CinA family.

In Streptococcus pyogenes serotype M18 (strain MGAS8232), this protein is Putative competence-damage inducible protein.